A 230-amino-acid chain; its full sequence is Ribonuclease 3 (230 aa).

One can recognise an RNase III domain in the interval 5-134 (EALLENSFNI…FLGALLLDKG (130 aa)). Mg(2+) is bound at residue Glu-47. Residue Asp-51 is part of the active site. The Mg(2+) site is built by Asp-120 and Glu-123. The active site involves Glu-123. In terms of domain architecture, DRBM spans 160–229 (DYKTCLQELL…AKNALAQLSE (70 aa)).

This sequence belongs to the ribonuclease III family. Homodimer. It depends on Mg(2+) as a cofactor.

The protein resides in the cytoplasm. It carries out the reaction Endonucleolytic cleavage to 5'-phosphomonoester.. In terms of biological role, digests double-stranded RNA. Involved in the processing of primary rRNA transcript to yield the immediate precursors to the large and small rRNAs (23S and 16S). Processes some mRNAs, and tRNAs when they are encoded in the rRNA operon. Processes pre-crRNA and tracrRNA of type II CRISPR loci if present in the organism. This Streptococcus equi subsp. zooepidemicus (strain H70) protein is Ribonuclease 3.